Here is a 73-residue protein sequence, read N- to C-terminus: Mu-conotoxin PIIIA (73 aa).

Positions Met-1–Ala-19 are cleaved as a signal peptide. A propeptide spanning residues Leu-20 to Arg-49 is cleaved from the precursor. Gln-50 carries the pyrrolidone carboxylic acid modification. Cystine bridges form between Cys-53–Cys-65, Cys-53–Cys-70, Cys-54–Cys-70, Cys-54–Cys-71, Cys-60–Cys-65, and Cys-60–Cys-71. Pro-57 is modified (4-hydroxyproline). Position 67 is a 4-hydroxyproline (Pro-67). Cys-71 bears the Cysteine amide mark.

The protein belongs to the conotoxin M superfamily. In terms of processing, 3D-structure of 3 disulfide-bond connectivities isomers is described (PIIIA-1 (C1-C5, C2-C6, C3-C4), PIIIA-2 (C1-C4, C2-C5, C3-C6) and PIIIA-3 (C1-C2, C3-C4, C5-C6)). Only PIIIA-2 contains the cysteine connectivity described as typical for native mu-conotoxins. However, PIIIA-1 is more potent than PIIIA-2, suggesting another possible disulfid connectivity. For this reason, both connectivities have been indicated in features. As to expression, expressed by the venom duct.

It localises to the secreted. Its function is as follows. Mu-conotoxins block voltage-gated sodium channels (Nav). This toxin potently blocks rNav1.4/SCN4A (IC(50)=36-41 nM). It also moderately blocks rNav1.1/SCN1A (IC(50)=120 nM), rNav1.2/SCN2A (IC(50)=620 nM), rNav1.3/SCN3A (IC(50)=3.2 uM), mNav1.6/SCN8A (IC(50)=100 nM). This inhibition is reversible. The block of Nav1.1, Nav1.2, and Nav1.6 is modified when beta-subunits are coexpressed with alpha subunits. Hence, blocks of channels containing the beta-1 and beta-3 subunits are more potent (compared to channels without beta subunits), whereas blocks of channels containing the beta-2 and beta-4 are less potent (compared to channels without beta subunits). In vivo, this peptide causes flaccid paralysis in both mice and fish. The protein is Mu-conotoxin PIIIA of Conus purpurascens (Purple cone).